Consider the following 397-residue polypeptide: 3-ketoacyl-CoA thiolase, mitochondrial (397 aa).

The transit peptide at 1 to 16 (MALLRGVFIVAAKRTP) directs the protein to the mitochondrion; not cleaved. Lys25 carries the N6-acetyllysine; alternate modification. Lys25 carries the post-translational modification N6-succinyllysine; alternate. Lys45 bears the N6-succinyllysine mark. The active-site Acyl-thioester intermediate is the Cys92. Phosphothreonine is present on Thr119. A Phosphoserine modification is found at Ser121. Tyr127 is subject to Phosphotyrosine. Thr136 is modified (phosphothreonine). An N6-acetyllysine; alternate mark is found at Lys137, Lys143, Lys158, Lys171, Lys191, and Lys209. Lys137, Lys143, Lys158, Lys171, Lys191, and Lys209 each carry N6-succinyllysine; alternate. N6-succinyllysine occurs at positions 211, 212, and 214. Positions 224 and 227 each coordinate CoA. N6-succinyllysine is present on Lys240. The residue at position 241 (Lys241) is an N6-acetyllysine. Residue Ser251 coordinates CoA. N6-acetyllysine is present on residues Lys269 and Lys270. Lys305 bears the N6-acetyllysine; alternate mark. An N6-succinyllysine; alternate modification is found at Lys305. Ser310 is modified (phosphoserine). The residue at position 312 (Lys312) is an N6-acetyllysine; alternate. Lys312 carries the N6-succinyllysine; alternate modification. Position 333 is a phosphoserine (Ser333). Lys340 is subject to N6-acetyllysine. At Ser344 the chain carries Phosphoserine. Position 375 is an N6-acetyllysine (Lys375). Catalysis depends on Cys382, which acts as the Proton donor/acceptor.

It belongs to the thiolase-like superfamily. Thiolase family. As to quaternary structure, homotetramer. Interacts with BNIP3. Expressed in liver, brown adipose tissue and heart (at protein level).

It is found in the mitochondrion. The enzyme catalyses an acyl-CoA + acetyl-CoA = a 3-oxoacyl-CoA + CoA. The catalysed reaction is 2 acetyl-CoA = acetoacetyl-CoA + CoA. It catalyses the reaction acetyl-CoA + H2O = acetate + CoA + H(+). It carries out the reaction propanoyl-CoA + H2O = propanoate + CoA + H(+). The enzyme catalyses butanoyl-CoA + H2O = butanoate + CoA + H(+). The catalysed reaction is hexanoyl-CoA + H2O = hexanoate + CoA + H(+). It catalyses the reaction octanoyl-CoA + H2O = octanoate + CoA + H(+). It carries out the reaction decanoyl-CoA + H2O = decanoate + CoA + H(+). The enzyme catalyses dodecanoyl-CoA + H2O = dodecanoate + CoA + H(+). The catalysed reaction is tetradecanoyl-CoA + H2O = tetradecanoate + CoA + H(+). It catalyses the reaction hexadecanoyl-CoA + H2O = hexadecanoate + CoA + H(+). It functions in the pathway lipid metabolism; fatty acid beta-oxidation. With respect to regulation, the 3-oxoacetyl-CoA thiolase activity is inhibited by acetyl-CoA while the acetyl-CoA hydrolase activity is inhibited by acetoacetyl-CoA. In terms of biological role, in the production of energy from fats, this is one of the enzymes that catalyzes the last step of the mitochondrial beta-oxidation pathway, an aerobic process breaking down fatty acids into acetyl-CoA. Using free coenzyme A/CoA, catalyzes the thiolytic cleavage of medium- to long-chain unbranched 3-oxoacyl-CoAs into acetyl-CoA and a fatty acyl-CoA shortened by two carbon atoms. Also catalyzes the condensation of two acetyl-CoA molecules into acetoacetyl-CoA and could be involved in the production of ketone bodies. Also displays hydrolase activity on various fatty acyl-CoAs. Thereby, could be responsible for the production of acetate in a side reaction to beta-oxidation. Abolishes BNIP3-mediated apoptosis and mitochondrial damage. In Rattus norvegicus (Rat), this protein is 3-ketoacyl-CoA thiolase, mitochondrial (Acaa2).